We begin with the raw amino-acid sequence, 143 residues long: MSLKRTRARERALQALYQIDVAAEGIDDALSRFWKSFEPVEREVMEDAEGFVRGVAAHRRTIDDTIEGVSTNWRLDRMAKVDRNVLRLAVYELLRTDVPVKVAINEAIELGKKYGSESSGAFVNGVLDKVAAGLPPERRRTDR.

This sequence belongs to the NusB family.

Involved in transcription antitermination. Required for transcription of ribosomal RNA (rRNA) genes. Binds specifically to the boxA antiterminator sequence of the ribosomal RNA (rrn) operons. This Anaeromyxobacter sp. (strain Fw109-5) protein is Transcription antitermination protein NusB.